A 536-amino-acid chain; its full sequence is 2,3-bisphosphoglycerate-independent phosphoglycerate mutase (536 aa).

Residues D19 and S69 each contribute to the Mn(2+) site. Residue S69 is the Phosphoserine intermediate of the active site. Substrate is bound by residues H130, 160–161 (RD), R192, R198, 262–265 (RPDR), and K335. 5 residues coordinate Mn(2+): D402, H406, D443, H444, and H461.

It belongs to the BPG-independent phosphoglycerate mutase family. Monomer. The cofactor is Mn(2+).

It carries out the reaction (2R)-2-phosphoglycerate = (2R)-3-phosphoglycerate. Its pathway is carbohydrate degradation; glycolysis; pyruvate from D-glyceraldehyde 3-phosphate: step 3/5. Catalyzes the interconversion of 2-phosphoglycerate and 3-phosphoglycerate. The protein is 2,3-bisphosphoglycerate-independent phosphoglycerate mutase of Gloeobacter violaceus (strain ATCC 29082 / PCC 7421).